A 927-amino-acid chain; its full sequence is Probable dipeptidyl-aminopeptidase B (927 aa).

Disordered regions lie at residues 1-44 (MAPA…TTSI) and 58-101 (GHFE…KNDG). Topologically, residues 1 to 108 (MAPAPGMAPY…NDGMNRGMRR (108 aa)) are cytoplasmic. Composition is skewed to basic and acidic residues over residues 19 to 36 (HRPE…HESE) and 58 to 70 (GHFE…PMKE). Residues 109–129 (TLIIVAGLLISAWVVGLFFYV) traverse the membrane as a helical; Signal-anchor for type II membrane protein segment. At 130–927 (SHKSYKPASQ…RSIQPILPIL (798 aa)) the chain is on the vacuolar side. Asparagine 365 and asparagine 530 each carry an N-linked (GlcNAc...) asparagine glycan. The Charge relay system role is filled by serine 769. Residue asparagine 828 is glycosylated (N-linked (GlcNAc...) asparagine). Active-site charge relay system residues include aspartate 846 and histidine 879.

It belongs to the peptidase S9B family.

It is found in the vacuole membrane. It catalyses the reaction Release of an N-terminal dipeptide, Xaa-Yaa-|-Zaa-, from a polypeptide, preferentially when Yaa is Pro, provided Zaa is neither Pro nor hydroxyproline.. In terms of biological role, type IV dipeptidyl-peptidase which removes N-terminal dipeptides sequentially from polypeptides having unsubstituted N-termini provided that the penultimate residue is proline. This Podospora anserina (strain S / ATCC MYA-4624 / DSM 980 / FGSC 10383) (Pleurage anserina) protein is Probable dipeptidyl-aminopeptidase B (DAPB).